We begin with the raw amino-acid sequence, 685 residues long: Phenoloxidase subunit 1 (685 aa).

The propeptide occupies 1 to 51 (MSDAKNNLLLFFDRPSEPCFMQKGEENAVFEIPDNYYPEKYQRVSNAIGNR). N184 carries N-linked (GlcNAc...) asparagine glycosylation. Cu cation is bound by residues H209, H213, and H239. N254 and N324 each carry an N-linked (GlcNAc...) asparagine glycan. The Proton acceptor role is filled by E351. Residues H366, H370, and H406 each coordinate Cu cation. N-linked (GlcNAc...) asparagine glycosylation is found at N491 and N540. 2 disulfide bridges follow: C581–C623 and C583–C630.

As to quaternary structure, heterodimer. It depends on Cu(2+) as a cofactor. In terms of processing, the N-terminus is blocked. As to expression, synthesized by hemocytes and released into the hemolymph plasma.

The protein localises to the secreted. It carries out the reaction 2 L-dopa + O2 = 2 L-dopaquinone + 2 H2O. It catalyses the reaction L-tyrosine + O2 = L-dopaquinone + H2O. This is a copper-containing oxidase that functions in the formation of pigments such as melanins and other polyphenolic compounds. Catalyzes the rate-limiting conversions of tyrosine to DOPA, DOPA to DOPA-quinone and possibly 5,6 dihydroxyindole to indole-5'6 quinone. The chain is Phenoloxidase subunit 1 from Bombyx mori (Silk moth).